The sequence spans 642 residues: UvrABC system protein C (642 aa).

Residues 20–97 form the GIY-YIG domain; that stretch reads ERCGVYRMFD…IKKFQPKFNI (78 aa). The UVR domain occupies 207 to 242; it reads KELQENLSKKMEELSSQMRFEEAAEIRDRIKALSYV.

Belongs to the UvrC family. As to quaternary structure, interacts with UvrB in an incision complex.

It localises to the cytoplasm. Its function is as follows. The UvrABC repair system catalyzes the recognition and processing of DNA lesions. UvrC both incises the 5' and 3' sides of the lesion. The N-terminal half is responsible for the 3' incision and the C-terminal half is responsible for the 5' incision. The protein is UvrABC system protein C of Rickettsia felis (strain ATCC VR-1525 / URRWXCal2) (Rickettsia azadi).